Consider the following 548-residue polypeptide: Viridiflorene synthase (548 aa).

Mg(2+) contacts are provided by D301, D305, D444, T448, and E452. Positions 301–305 (DDTFD) match the DDXXD motif motif.

It belongs to the terpene synthase family. Tpsa subfamily. Mg(2+) serves as cofactor. Expressed in stem and leaf trichomes. Detected in roots, fruits and flowers.

The protein localises to the cytoplasm. The enzyme catalyses (2E,6E)-farnesyl diphosphate = viridiflorene + diphosphate. It functions in the pathway secondary metabolite biosynthesis; terpenoid biosynthesis. Sesquiterpene synthase involved in the production of viridiflorene from (E,E)-farnesyl diphosphate. Can also use (Z,Z)-FPP to make several unidentified sesquiterpenes. The polypeptide is Viridiflorene synthase (Solanum lycopersicum (Tomato)).